A 497-amino-acid chain; its full sequence is Cobyric acid synthase (497 aa).

Positions W257 to F431 constitute a GATase cobBQ-type domain. The active-site Nucleophile is C338. H423 is an active-site residue.

Belongs to the CobB/CobQ family. CobQ subfamily.

It functions in the pathway cofactor biosynthesis; adenosylcobalamin biosynthesis. Functionally, catalyzes amidations at positions B, D, E, and G on adenosylcobyrinic A,C-diamide. NH(2) groups are provided by glutamine, and one molecule of ATP is hydrogenolyzed for each amidation. In Mycolicibacterium paratuberculosis (strain ATCC BAA-968 / K-10) (Mycobacterium paratuberculosis), this protein is Cobyric acid synthase.